A 252-amino-acid chain; its full sequence is Phosphoglycolate phosphatase (252 aa).

Asp13 (nucleophile) is an active-site residue. The Mg(2+) site is built by Asp13, Asp15, and Asp192.

The protein belongs to the HAD-like hydrolase superfamily. CbbY/CbbZ/Gph/YieH family. Monomer. It depends on Mg(2+) as a cofactor. The cofactor is chloride.

The enzyme catalyses 2-phosphoglycolate + H2O = glycolate + phosphate. It functions in the pathway organic acid metabolism; glycolate biosynthesis; glycolate from 2-phosphoglycolate: step 1/1. Its function is as follows. Specifically catalyzes the dephosphorylation of 2-phosphoglycolate. Is involved in the dissimilation of the intracellular 2-phosphoglycolate formed during the DNA repair of 3'-phosphoglycolate ends, a major class of DNA lesions induced by oxidative stress. This chain is Phosphoglycolate phosphatase, found in Escherichia coli O157:H7.